The following is a 117-amino-acid chain: Phosphoribosyl-ATP pyrophosphatase (117 aa).

It belongs to the PRA-PH family.

The protein localises to the cytoplasm. It catalyses the reaction 1-(5-phospho-beta-D-ribosyl)-ATP + H2O = 1-(5-phospho-beta-D-ribosyl)-5'-AMP + diphosphate + H(+). The protein operates within amino-acid biosynthesis; L-histidine biosynthesis; L-histidine from 5-phospho-alpha-D-ribose 1-diphosphate: step 2/9. This is Phosphoribosyl-ATP pyrophosphatase from Rhodospirillum rubrum (strain ATCC 11170 / ATH 1.1.1 / DSM 467 / LMG 4362 / NCIMB 8255 / S1).